The chain runs to 499 residues: Lysine--tRNA ligase (499 aa).

Mg(2+)-binding residues include Glu408 and Glu415.

Belongs to the class-II aminoacyl-tRNA synthetase family. As to quaternary structure, homodimer. Mg(2+) is required as a cofactor.

It is found in the cytoplasm. It catalyses the reaction tRNA(Lys) + L-lysine + ATP = L-lysyl-tRNA(Lys) + AMP + diphosphate. The sequence is that of Lysine--tRNA ligase from Thermoanaerobacter sp. (strain X514).